The chain runs to 2446 residues: Transcription factor HIVEP2 (2446 aa).

Residues 1–93 (MDTGDTALGQ…YPPHRPSPYS (93 aa)) form a disordered region. Residues 17-28 (GETDKASGRWRQ) show a composition bias toward basic and acidic residues. 2 consecutive C2H2-type zinc fingers follow at residues 189 to 211 (YICP…IRSH) and 217 to 239 (YPCI…RKSH). Disordered stretches follow at residues 272-303 (HSDG…PIPL), 340-416 (ESSQ…PPNT), 543-563 (SNSV…LRGS), and 751-985 (SHGH…SFER). Polar residues-rich tracts occupy residues 381–416 (SEPS…PPNT) and 543–556 (SNSV…NLTI). Basic and acidic residues predominate over residues 751–760 (SHGHTERFDP). Over residues 766–777 (QPGSPSLVSEES) the composition is skewed to polar residues. Positions 782–791 (DSDKMSDLGG) are enriched in basic and acidic residues. Over residues 800–812 (SVIQHTNSLSRPN) the composition is skewed to polar residues. Residue Ser-819 is modified to Phosphoserine. Low complexity predominate over residues 863 to 878 (PSPSQQVQQQSYHTQP). Residues 892 to 916 (RVTEEPDKPEKEKEAQSKEPEKPVE) are compositionally biased toward basic and acidic residues. Residues 937 to 943 (PKKKRLR) carry the Nuclear localization signal motif. Ser-950, Ser-955, Ser-1048, Ser-1443, and Ser-1447 each carry phosphoserine. The segment covering 952-982 (GESSFESTGTGLSRSPSQESNLSHSSSFSMS) has biased composition (low complexity). A disordered region spans residues 1485–1603 (KDLSRPQKPQ…LEEEGKGHKR (119 aa)). Composition is skewed to low complexity over residues 1510-1533 (SGSS…SPSS) and 1576-1586 (SDMSMSPQSSS). C2H2-type zinc fingers lie at residues 1799–1821 (YICE…IRTH) and 1827–1851 (YVCK…SKAH). Disordered regions lie at residues 1882-1951 (AAEK…VNVG) and 2024-2129 (EECM…RRDL). A compositionally biased stretch (acidic residues) spans 1899–1925 (DAEESDGEDGDDNDDDDEDEDDFDDQG). A compositionally biased stretch (low complexity) spans 2029–2053 (PSEPSSSPRDFSPSSHHSSPGYDSS). Tandem repeats lie at residues 2053-2056 (SPCR), 2059-2062 (SPKR), 2071-2074 (SPRR), 2083-2086 (SPMR), 2089-2092 (SPRK), 2106-2109 (SPRR), 2112-2115 (SPRR), 2118-2121 (SPGK), 2130-2133 (SPRR), and 2145-2148 (SPRR). Residues 2053–2148 (SPCRDNSPKR…TTIRAPSPRR (96 aa)) are 10 X 4 AA tandem repeats of S-P-[RGMKC]-[RK]. Basic and acidic residues predominate over residues 2078–2107 (PRRDLSPMRHLSPRKEAALRREMSQRDVSP). Ser-2118 is modified (phosphoserine). 3 disordered regions span residues 2242–2325 (PALS…QEEN), 2371–2403 (HFSR…SQTP), and 2423–2446 (HSSK…SQLH). Ser-2297 and Ser-2301 each carry phosphoserine. Residues 2307–2317 (KQSTSEDSLNA) are compositionally biased toward polar residues. Positions 2387–2396 (PDLHDGEKDN) are enriched in basic and acidic residues. A phosphoserine mark is found at Ser-2429 and Ser-2431. Over residues 2433–2446 (EESKDPSSEKSQLH) the composition is skewed to basic and acidic residues.

Interacts with TCF4. As to expression, expressed in brain and skeletal muscle.

It is found in the nucleus. This protein specifically binds to the DNA sequence 5'-GGGACTTTCC-3' which is found in the enhancer elements of numerous viral promoters such as those of SV40, CMV, or HIV1. In addition, related sequences are found in the enhancer elements of a number of cellular promoters, including those of the class I MHC, interleukin-2 receptor, somatostatin receptor II, and interferon-beta genes. It may act in T-cell activation. The chain is Transcription factor HIVEP2 (HIVEP2) from Homo sapiens (Human).